The chain runs to 138 residues: MTAIRLREFIDRRPAIPPSIFIVHQGKDLRGYYTGQLARVHYDYSVKRSPRPLIDLDIPFKKKSQYQPQLDQQTLIQYICFRRRSKPAEPWYKETSYQRDYSLPFYKTDWDRKLATVSSNPRPLNSLPEHYCCEGRWL.

This Bos taurus (Bovine) protein is Protein SPMIP3 (SPMIP3).